Consider the following 484-residue polypeptide: Probable cytosol aminopeptidase (484 aa).

Mn(2+)-binding residues include Lys256 and Asp261. Lys268 is a catalytic residue. Mn(2+) is bound by residues Asp279, Asp338, and Glu340. Residue Arg342 is part of the active site.

This sequence belongs to the peptidase M17 family. Mn(2+) is required as a cofactor.

Its subcellular location is the cytoplasm. It catalyses the reaction Release of an N-terminal amino acid, Xaa-|-Yaa-, in which Xaa is preferably Leu, but may be other amino acids including Pro although not Arg or Lys, and Yaa may be Pro. Amino acid amides and methyl esters are also readily hydrolyzed, but rates on arylamides are exceedingly low.. The enzyme catalyses Release of an N-terminal amino acid, preferentially leucine, but not glutamic or aspartic acids.. Presumably involved in the processing and regular turnover of intracellular proteins. Catalyzes the removal of unsubstituted N-terminal amino acids from various peptides. The protein is Probable cytosol aminopeptidase of Actinobacillus succinogenes (strain ATCC 55618 / DSM 22257 / CCUG 43843 / 130Z).